The chain runs to 420 residues: Gamma-glutamyl phosphate reductase (420 aa).

It belongs to the gamma-glutamyl phosphate reductase family.

It localises to the cytoplasm. The enzyme catalyses L-glutamate 5-semialdehyde + phosphate + NADP(+) = L-glutamyl 5-phosphate + NADPH + H(+). Its pathway is amino-acid biosynthesis; L-proline biosynthesis; L-glutamate 5-semialdehyde from L-glutamate: step 2/2. Functionally, catalyzes the NADPH-dependent reduction of L-glutamate 5-phosphate into L-glutamate 5-semialdehyde and phosphate. The product spontaneously undergoes cyclization to form 1-pyrroline-5-carboxylate. The polypeptide is Gamma-glutamyl phosphate reductase (Cereibacter sphaeroides (strain KD131 / KCTC 12085) (Rhodobacter sphaeroides)).